A 396-amino-acid chain; its full sequence is L-lactate dehydrogenase (396 aa).

The FMN hydroxy acid dehydrogenase domain maps to 1–380 (MIISAASDYR…TQDSLVQVLG (380 aa)). Tyrosine 24 contacts substrate. Residues serine 106 and glutamine 127 each contribute to the FMN site. Tyrosine 129 serves as a coordination point for substrate. Position 155 (threonine 155) interacts with FMN. Arginine 164 lines the substrate pocket. Lysine 251 contributes to the FMN binding site. Histidine 275 functions as the Proton acceptor in the catalytic mechanism. Arginine 278 contributes to the substrate binding site. 306–330 (DSGIRNGLDVVRMIALGADTVLLGR) contacts FMN.

The protein belongs to the FMN-dependent alpha-hydroxy acid dehydrogenase family. It depends on FMN as a cofactor.

Its subcellular location is the cell inner membrane. The catalysed reaction is (S)-lactate + A = pyruvate + AH2. Functionally, catalyzes the conversion of L-lactate to pyruvate. Is coupled to the respiratory chain. In Escherichia coli O1:K1 / APEC, this protein is L-lactate dehydrogenase.